A 162-amino-acid chain; its full sequence is Small ribosomal subunit protein uS7m (162 aa).

This sequence belongs to the universal ribosomal protein uS7 family. In terms of assembly, part of the small ribosomal subunit.

The protein localises to the mitochondrion. Functionally, one of the primary rRNA binding proteins, it binds directly to 16S-like rRNA where it nucleates assembly of the head domain of the small subunit. In Dictyostelium citrinum (Slime mold), this protein is Small ribosomal subunit protein uS7m (mrps7).